Consider the following 587-residue polypeptide: Chaperonin GroEL 1 (587 aa).

ATP contacts are provided by residues 29 to 32, 86 to 90, Gly413, and Asp492; these read TIGP and DGTTT.

It belongs to the chaperonin (HSP60) family. In terms of assembly, forms a cylinder of 14 subunits composed of two heptameric rings stacked back-to-back. Interacts with the co-chaperonin GroES.

It localises to the cytoplasm. It catalyses the reaction ATP + H2O + a folded polypeptide = ADP + phosphate + an unfolded polypeptide.. Together with its co-chaperonin GroES, plays an essential role in assisting protein folding. The GroEL-GroES system forms a nano-cage that allows encapsulation of the non-native substrate proteins and provides a physical environment optimized to promote and accelerate protein folding. This is Chaperonin GroEL 1 from Prochlorococcus marinus (strain MIT 9515).